Reading from the N-terminus, the 190-residue chain is Casparian strip membrane protein 1 (190 aa).

The Cytoplasmic portion of the chain corresponds to 1 to 24 (MKAESGSADAKLPLPPPVGRKRRG). The chain crosses the membrane as a helical span at residues 25-45 (LAILDFLLRLLAIGATLSAAI). Residues 46 to 72 (AMGTNNETLKFFTQFFQFNARFYNLSA) lie on the Extracellular side of the membrane. Residues Asn51 and Asn69 are each glycosylated (N-linked (GlcNAc...) asparagine). The chain crosses the membrane as a helical span at residues 73–93 (FIYFVIANATVGLYLLLSLPF). Topologically, residues 94 to 107 (SIFDIVRPRAAAFR) are cytoplasmic. Residues 108–128 (VLLIFFDTVMVAVCTSGAAAA) form a helical membrane-spanning segment. Over 129–157 (TAIMYVARRGNTKTNWFSICQQFNSFCDQ) the chain is Extracellular. A helical membrane pass occupies residues 158–178 (ATGALGASFAAVVLLILLVLL). Over 179 to 190 (SASTLHRQRADF) the chain is Cytoplasmic.

It belongs to the Casparian strip membrane proteins (CASP) family. In terms of assembly, homodimer and heterodimers.

The protein resides in the cell membrane. Functionally, regulates membrane-cell wall junctions and localized cell wall deposition. Required for establishment of the Casparian strip membrane domain (CSD) and the subsequent formation of Casparian strips, a cell wall modification of the root endodermis that determines an apoplastic barrier between the intraorganismal apoplasm and the extraorganismal apoplasm and prevents lateral diffusion. The polypeptide is Casparian strip membrane protein 1 (Pinus taeda (Loblolly pine)).